Here is a 475-residue protein sequence, read N- to C-terminus: UDP-N-acetylmuramate--L-alanine ligase (475 aa).

Position 125–131 (125–131) interacts with ATP; the sequence is GTHGKTT.

It belongs to the MurCDEF family.

It is found in the cytoplasm. It catalyses the reaction UDP-N-acetyl-alpha-D-muramate + L-alanine + ATP = UDP-N-acetyl-alpha-D-muramoyl-L-alanine + ADP + phosphate + H(+). Its pathway is cell wall biogenesis; peptidoglycan biosynthesis. Cell wall formation. This chain is UDP-N-acetylmuramate--L-alanine ligase, found in Haemophilus influenzae (strain PittGG).